We begin with the raw amino-acid sequence, 729 residues long: Dipeptidyl peptidase 3 (729 aa).

His-459 is a binding site for Zn(2+). Glu-460 is an active-site residue. Zn(2+)-binding residues include His-464 and Glu-517.

Belongs to the peptidase M49 family. Requires Zn(2+) as cofactor.

Its subcellular location is the cytoplasm. The catalysed reaction is Release of an N-terminal dipeptide from a peptide comprising four or more residues, with broad specificity. Also acts on dipeptidyl 2-naphthylamides.. The polypeptide is Dipeptidyl peptidase 3 (dpp3) (Nematostella vectensis (Starlet sea anemone)).